The chain runs to 80 residues: uncharacterized protein (80 aa).

The chain crosses the membrane as a helical span at residues 10–29; that stretch reads FVAREYPLVVVPFIYFVLFL.

Its subcellular location is the membrane. This is an uncharacterized protein from Saccharomyces cerevisiae (strain ATCC 204508 / S288c) (Baker's yeast).